Reading from the N-terminus, the 152-residue chain is Lipoprotein signal peptidase (152 aa).

Helical transmembrane passes span 5 to 25 (LFVL…FWIV), 61 to 81 (WFFV…LATH), and 84 to 104 (LNIW…GNFI). Residues Asp-114 and Asp-130 contribute to the active site. Residues 125–145 (IFNVADSYLTVGVILLVICLW) traverse the membrane as a helical segment.

This sequence belongs to the peptidase A8 family.

The protein resides in the cell membrane. The enzyme catalyses Release of signal peptides from bacterial membrane prolipoproteins. Hydrolyzes -Xaa-Yaa-Zaa-|-(S,diacylglyceryl)Cys-, in which Xaa is hydrophobic (preferably Leu), and Yaa (Ala or Ser) and Zaa (Gly or Ala) have small, neutral side chains.. It participates in protein modification; lipoprotein biosynthesis (signal peptide cleavage). Its function is as follows. This protein specifically catalyzes the removal of signal peptides from prolipoproteins. In Streptococcus pyogenes serotype M18 (strain MGAS8232), this protein is Lipoprotein signal peptidase.